The following is a 463-amino-acid chain: POU domain, class 2, transcription factor 2 (463 aa).

5 disordered regions span residues 1 to 87 (MVHS…QPHL), 159 to 182 (QPRA…EEPS), 259 to 282 (SSLP…GRRR), 341 to 376 (PCSA…LSQA), and 393 to 463 (TLHP…PYQP). A compositionally biased stretch (basic and acidic residues) spans 12–37 (RMSKPLEAEKQSLDSPSEHTDTERNG). The span at 41–60 (NHQNPQNKASPFSVSPTGPS) shows a compositional bias: polar residues. Pro residues predominate over residues 75 to 85 (AAPPPPQPAQP). A POU-specific domain is found at 179–253 (EEPSDLEELE…LLEKWLNDAE (75 aa)). The span at 259 to 272 (SSLPSPNQLSSPSL) shows a compositional bias: low complexity. Residues 281–340 (RRKKRTSIETNVRFALEKSFLANQKPTSEEILLIAEQLHMEKEVIRVWFCNRRQKEKRIN) constitute a DNA-binding region (homeobox). The leucine-zipper stretch occupies residues 373 to 394 (LSQASSSLSTTVTTLSSAVGTL). Residues 400 to 409 (AGGGGGGGGA) show a composition bias toward gly residues.

It belongs to the POU transcription factor family. Class-2 subfamily. Interacts with NR3C1, AR and PGR. Interacts with POU2AF1; the interaction increases POU2F2 transactivation activity. In terms of tissue distribution, highest in B cells, but also present in brain (neuronal and glial cells), intestine, kidney, and testes. Expressed at higher levels in B-cells than in neuronal cells. As to expression, expressed in neuronal cell lines and brain, but not dorsal root ganglia. In terms of tissue distribution, expressed at lower levels in neuronal cells than in B cells. Expressed in neuronal cell lines, and at lower levels in neuroblastoma and dorsal root ganglia. As to expression, widely expressed in the developing nervous system but expression is confined to very specific regions in the adult brain, it is expressed at a lower level in B cells. In terms of tissue distribution, either absent in, or expressed at very low levels in neuronal cells and brain. Expressed in all tissues tested: mammary gland, liver, spleen, lung, kidney intestine, uterus and ovary of a virgin mouse. Levels of isoform OCT2.7 are highest in spleen and lung. In mammary gland, expression is localized to the alveolus epithelial cells.

Its subcellular location is the cytoplasm. The protein resides in the nucleus. Transactivation activity is enhanced by transcriptional coactivator POU2AF1. Its function is as follows. Transcription factor that specifically binds to the octamer motif (5'-ATTTGCAT-3'). Regulates IL6 expression in B cells with POU2AF1. Regulates transcription in a number of tissues in addition to activating immunoglobulin gene expression. Modulates transcription transactivation by NR3C1, AR and PGR. Activates octamer-containing promoters. In terms of biological role, represses some promoters and activate others. Functionally, represses some promoters and activate others. Activates the U2 small nuclear RNA (snRNA) promoter. Its function is as follows. Unable to bind to the octamer motif, but can still activate the beta-casein gene promoter at low levels. This is POU domain, class 2, transcription factor 2 from Mus musculus (Mouse).